Reading from the N-terminus, the 178-residue chain is RNA pyrophosphohydrolase (178 aa).

The Nudix hydrolase domain occupies 18-171; the sequence is PYRPCVGLMV…KRKVYEQVVA (154 aa). Positions 59-80 match the Nudix box motif; that stretch reads GGIDKGEDPAQAALRELYEETG.

It belongs to the Nudix hydrolase family. RppH subfamily. Requires a divalent metal cation as cofactor.

In terms of biological role, accelerates the degradation of transcripts by removing pyrophosphate from the 5'-end of triphosphorylated RNA, leading to a more labile monophosphorylated state that can stimulate subsequent ribonuclease cleavage. This chain is RNA pyrophosphohydrolase, found in Brucella canis (strain ATCC 23365 / NCTC 10854 / RM-666).